Here is a 701-residue protein sequence, read N- to C-terminus: Elongation factor G (701 aa).

In terms of domain architecture, tr-type G spans 8–291 (SRYRNIGIVA…AVIDYLPAPI (284 aa)). GTP is bound by residues 17–24 (AHVDAGKT), 89–93 (DTPGH), and 143–146 (NKMD).

The protein belongs to the TRAFAC class translation factor GTPase superfamily. Classic translation factor GTPase family. EF-G/EF-2 subfamily.

Its subcellular location is the cytoplasm. Functionally, catalyzes the GTP-dependent ribosomal translocation step during translation elongation. During this step, the ribosome changes from the pre-translocational (PRE) to the post-translocational (POST) state as the newly formed A-site-bound peptidyl-tRNA and P-site-bound deacylated tRNA move to the P and E sites, respectively. Catalyzes the coordinated movement of the two tRNA molecules, the mRNA and conformational changes in the ribosome. This is Elongation factor G from Pseudomonas syringae pv. tomato (strain ATCC BAA-871 / DC3000).